A 106-amino-acid chain; its full sequence is Synaptic plasticity regulator PANTS (106 aa).

The disordered stretch occupies residues 67–106; sequence LQQSEKTRLEGKQNNSPVWTLRKNPPPDWYLPLDPGKPRQ.

This sequence belongs to the UPF0545 family. Rapidly degraded by proteolysis following neuronal stimulation, resulting in increased AMPA receptor clustering.

It is found in the synapse. Its subcellular location is the synaptic cleft. Its function is as follows. Negatively regulates long-term potentiation and modulates adult synaptic plasticity. This chain is Synaptic plasticity regulator PANTS, found in Xenopus laevis (African clawed frog).